Consider the following 183-residue polypeptide: MSAITPYDWAIIAFVIGVTFLCVFMLTVPLLLGGKSWGRAKQEQFESGVVSAGGARIRLSAKFYLVAIFFVVFDLEALYLYAWSTSVREVGWLGYTTVVIFVVDLLIALVYAFSVGALSWAPADRRKLAGEKVKVGSPTMNIAEITRFNSIEELVTDPTGQIPAQSSGRVKSKTTPALSSEKE.

The next 3 helical transmembrane spans lie at 11–31 (IIAF…VPLL), 63–83 (FYLV…LYAW), and 98–118 (VVIF…VGAL). Residues 159 to 183 (TGQIPAQSSGRVKSKTTPALSSEKE) are disordered.

It belongs to the complex I subunit 3 family. NDH-1 is composed of 14 different subunits. Subunits NuoA, H, J, K, L, M, N constitute the membrane sector of the complex.

It localises to the cell inner membrane. The catalysed reaction is a quinone + NADH + 5 H(+)(in) = a quinol + NAD(+) + 4 H(+)(out). Its function is as follows. NDH-1 shuttles electrons from NADH, via FMN and iron-sulfur (Fe-S) centers, to quinones in the respiratory chain. The immediate electron acceptor for the enzyme in this species is believed to be ubiquinone. Couples the redox reaction to proton translocation (for every two electrons transferred, four hydrogen ions are translocated across the cytoplasmic membrane), and thus conserves the redox energy in a proton gradient. This is NADH-quinone oxidoreductase subunit A from Acinetobacter baumannii (strain AYE).